Here is a 299-residue protein sequence, read N- to C-terminus: Protein PRY1 (299 aa).

The signal sequence occupies residues 1–19 (MKLSKLSILTSALATSALA). The disordered stretch occupies residues 103–157 (TDSTTTLTSSESTSQSLAQATTTSTPAAASTTSTPAATTTTSQAAATSSASSSDS). One can recognise an SCP domain in the interval 167-281 (LAEHNKKRAL…AWGDYVICSY (115 aa)).

Belongs to the CRISP family. O-glycosylated.

The protein resides in the secreted. Secreted protein required for efficient export of lipids such as acetylated sterols. Acts in detoxification of hydrophobic compounds. This Saccharomyces cerevisiae (strain ATCC 204508 / S288c) (Baker's yeast) protein is Protein PRY1.